Consider the following 89-residue polypeptide: UPF0237 protein CPE1496 (89 aa).

The ACT domain occupies 4–84 (VITVVGKDKV…ISVQHEDIFN (81 aa)).

It belongs to the UPF0237 family.

This is UPF0237 protein CPE1496 from Clostridium perfringens (strain 13 / Type A).